A 182-amino-acid polypeptide reads, in one-letter code: Urease accessory protein UreE (182 aa).

The disordered stretch occupies residues 128–182; that stretch reads PRTEPFRPEGGAYGHGRTLGHDHGPAQGHGHDHPHVHVHISHKPDEDETPDADPA. Residues 146 to 162 are compositionally biased toward basic and acidic residues; that stretch reads LGHDHGPAQGHGHDHPH. The segment covering 173–182 has biased composition (acidic residues); the sequence is EDETPDADPA.

Belongs to the UreE family.

The protein localises to the cytoplasm. Functionally, involved in urease metallocenter assembly. Binds nickel. Probably functions as a nickel donor during metallocenter assembly. The protein is Urease accessory protein UreE of Cereibacter sphaeroides (strain ATCC 17023 / DSM 158 / JCM 6121 / CCUG 31486 / LMG 2827 / NBRC 12203 / NCIMB 8253 / ATH 2.4.1.) (Rhodobacter sphaeroides).